Consider the following 195-residue polypeptide: Flavin prenyltransferase UbiX (195 aa).

FMN-binding positions include 17-19, S43, 94-97, and R129; these read GGS and SAGT. Residues Y159 and R175 each contribute to the dimethylallyl phosphate site.

The protein belongs to the UbiX/PAD1 family.

It catalyses the reaction dimethylallyl phosphate + FMNH2 = prenylated FMNH2 + phosphate. Flavin prenyltransferase that catalyzes the synthesis of the prenylated FMN cofactor (prenyl-FMN) for 4-hydroxy-3-polyprenylbenzoic acid decarboxylase UbiD. The prenyltransferase is metal-independent and links a dimethylallyl moiety from dimethylallyl monophosphate (DMAP) to the flavin N5 and C6 atoms of FMN. The polypeptide is Flavin prenyltransferase UbiX (Deinococcus radiodurans (strain ATCC 13939 / DSM 20539 / JCM 16871 / CCUG 27074 / LMG 4051 / NBRC 15346 / NCIMB 9279 / VKM B-1422 / R1)).